A 793-amino-acid chain; its full sequence is Short transient receptor potential channel 1 (793 aa).

The segment at 1–30 (MMAALYPSTDLSGVSSSSLPSSPSSSSPNE) is disordered. The Cytoplasmic portion of the chain corresponds to 1-345 (MMAALYPSTD…FGQMSGYRRK (345 aa)). Low complexity predominate over residues 15–28 (SSSSLPSSPSSSSP). 4 ANK repeats span residues 46–75 (LNEK…SGDL), 83–109 (LGRN…YGCQ), 111–156 (ADAL…EYST), and 158–180 (MDVA…MLLK). Zn(2+) is bound by residues histidine 189, cysteine 193, cysteine 195, and cysteine 198. The discontinuously helical intramembrane region spans 346 to 379 (PTCKKIMTVLTVGIFWPVLSLCYLIAPKSQFGRI). The Cytoplasmic segment spans residues 380–386 (IHTPFMK). Residues 387 to 404 (FIIHGASYFTFLLLLNLY) traverse the membrane as a helical segment. At 405 to 422 (SLVYNEDKKNTMGPALER) the chain is on the extracellular side. The helical transmembrane segment at 423 to 439 (IDYLLILWIIGMIWSDI) threads the bilayer. Topologically, residues 440-455 (KRLWYEGLEDFLEESR) are cytoplasmic. The chain crosses the membrane as a helical span at residues 456–475 (NQLSFVMNSLYLATFALKVV). Topologically, residues 476–496 (AHNKFHDFADRKDWDAFHPTL) are extracellular. Residues 497-517 (VAEGLFAFANVLSYLRLFFMY) traverse the membrane as a helical segment. Over 518-536 (TTSSILGPLQISMGQMLQD) the chain is Cytoplasmic. The helical transmembrane segment at 537–558 (FGKFLGMFLLVLFSFTIGLTQL) threads the bilayer. At 559 to 623 (YDKGYTSKEQ…GEELQSFVGA (65 aa)) the chain is on the extracellular side. A disulfide bridge links cysteine 571 with cysteine 576. The helical transmembrane segment at 624 to 644 (VIVGTYNVVVVIVLTKLLVAM) threads the bilayer. Topologically, residues 645–793 (LHKSFQLIAN…SKYAMFYPRN (149 aa)) are cytoplasmic.

The protein belongs to the transient receptor (TC 1.A.4) family. STrpC subfamily. TRPC1 sub-subfamily. In terms of assembly, heterotetramer with TRPC4 and/or TRPC5. Forms a heteromeric ion channel with TRPC4, with a 1:3 TRPC1:TRPC4 stoichiometry. Unlike other TRP channel proteins, does not form a homomeric channel. Interacts with TRPC4AP. Interacts with ITPR3. Interacts with MX1 and RNF24. Interacts with FKBP4. Interacts with PLSCR1. Interacts with PKD2L2. Forms a heterotetramer with PKD2 with a 2:2 stoichiometry; has distinct channel properties separate from PKD2 or TRPC1 homomers alone. In terms of processing, activation of PRKCA induces phosphorylation of TRPC1 and subsequent Ca2+ entry into cells.

It is found in the cell membrane. It carries out the reaction Ca(2+)(in) = Ca(2+)(out). The catalysed reaction is Na(+)(in) = Na(+)(out). It catalyses the reaction Li(+)(in) = Li(+)(out). The enzyme catalyses Cs(+)(in) = Cs(+)(out). May be operated by a phosphatidylinositol second messenger system activated by receptor tyrosine kinases or G-protein coupled receptors. Also activated by intracellular calcium store depletion. In terms of biological role, forms a receptor-activated non-selective calcium permeant cation channel. Forms a heteromeric ion channel with TRPC4 or TRPC5 that has reduced calcium permeability compared to the homomeric TRPC4 or TRPC5 channel. Also permeable to monovalent ions including sodium, lithium and cesium ions. In Mus musculus (Mouse), this protein is Short transient receptor potential channel 1 (Trpc1).